The primary structure comprises 564 residues: Membrane protein insertase YidC (564 aa).

A helical membrane pass occupies residues 7 to 24 (VLWVVFSFSLLMLWDNYN). Positions 43-60 (KPAAATDDGKTAAAPTAD) are enriched in low complexity. The interval 43–76 (KPAAATDDGKTAAAPTADVPTSSAHAANATGVPD) is disordered. The next 6 helical transmembrane spans lie at 293–313 (LATN…APGA), 341–361 (VKDY…MIQI), 364–384 (LLGN…LAFF), 438–458 (MPIV…LASV), 483–503 (IGSF…SMFI), and 524–544 (PIAF…YWVV).

Belongs to the OXA1/ALB3/YidC family. Type 1 subfamily. As to quaternary structure, interacts with the Sec translocase complex via SecD. Specifically interacts with transmembrane segments of nascent integral membrane proteins during membrane integration.

It localises to the cell inner membrane. Required for the insertion and/or proper folding and/or complex formation of integral membrane proteins into the membrane. Involved in integration of membrane proteins that insert both dependently and independently of the Sec translocase complex, as well as at least some lipoproteins. Aids folding of multispanning membrane proteins. This Janthinobacterium sp. (strain Marseille) (Minibacterium massiliensis) protein is Membrane protein insertase YidC.